The following is a 110-amino-acid chain: ATP-dependent Clp protease adapter protein ClpS (110 aa).

Basic and acidic residues predominate over residues 1 to 10 (MSDDRRRGDE). The disordered stretch occupies residues 1–27 (MSDDRRRGDEDGGAGTGVITKTKPKTK).

It belongs to the ClpS family. In terms of assembly, binds to the N-terminal domain of the chaperone ClpA.

Involved in the modulation of the specificity of the ClpAP-mediated ATP-dependent protein degradation. This Parvibaculum lavamentivorans (strain DS-1 / DSM 13023 / NCIMB 13966) protein is ATP-dependent Clp protease adapter protein ClpS.